The sequence spans 318 residues: Transaldolase (318 aa).

The active-site Schiff-base intermediate with substrate is lysine 132.

The protein belongs to the transaldolase family. Type 1 subfamily. In terms of assembly, homodimer.

Its subcellular location is the cytoplasm. It carries out the reaction D-sedoheptulose 7-phosphate + D-glyceraldehyde 3-phosphate = D-erythrose 4-phosphate + beta-D-fructose 6-phosphate. Its pathway is carbohydrate degradation; pentose phosphate pathway; D-glyceraldehyde 3-phosphate and beta-D-fructose 6-phosphate from D-ribose 5-phosphate and D-xylulose 5-phosphate (non-oxidative stage): step 2/3. Functionally, transaldolase is important for the balance of metabolites in the pentose-phosphate pathway. The chain is Transaldolase from Shewanella putrefaciens (strain CN-32 / ATCC BAA-453).